We begin with the raw amino-acid sequence, 187 residues long: Putative glutathione-dependent formaldehyde-activating enzyme (187 aa).

A CENP-V/GFA domain is found at 20-166 (FQGGVLKCKC…FESLGLESYD (147 aa)). Residues Cys27, Cys29, Cys48, Cys50, Cys53, Cys95, and Cys98 each coordinate Zn(2+).

It belongs to the Gfa family. Requires Zn(2+) as cofactor.

The enzyme catalyses S-(hydroxymethyl)glutathione = glutathione + formaldehyde. It functions in the pathway one-carbon metabolism; formaldehyde degradation; formate from formaldehyde (glutathione route): step 1/3. In terms of biological role, catalyzes the condensation of formaldehyde and glutathione to S-hydroxymethylglutathione. The protein is Putative glutathione-dependent formaldehyde-activating enzyme of Verticillium alfalfae (strain VaMs.102 / ATCC MYA-4576 / FGSC 10136) (Verticillium wilt of alfalfa).